Reading from the N-terminus, the 366-residue chain is Peroxisomal (S)-2-hydroxy-acid oxidase GLO4 (366 aa).

The FMN hydroxy acid dehydrogenase domain occupies 1 to 360 (MEDNLPVNVR…TRSHVMTEGD (360 aa)). Residue tyrosine 27 coordinates a 2-oxocarboxylate. Residues 80-82 (PTG), serine 109, 130-132 (QLY), and threonine 158 each bind FMN. Residue tyrosine 132 coordinates a 2-oxocarboxylate. Arginine 167 contributes to the a 2-oxocarboxylate binding site. Positions 231 and 253 each coordinate FMN. The Proton acceptor role is filled by histidine 255. Arginine 258 provides a ligand contact to a 2-oxocarboxylate. FMN-binding positions include 286–290 (DGGIR) and 309–310 (GR). Residues 364–366 (SLL) carry the Microbody targeting signal motif.

It belongs to the FMN-dependent alpha-hydroxy acid dehydrogenase family. In terms of assembly, homotetramer. Binds to CATB and CATC; these interactions are disturbed by alpha-hydroxy-2-pyridinemethanesulfonic acid (HPMS) and salicylic acid (SA). The cofactor is FMN.

The protein localises to the peroxisome. The enzyme catalyses a (2S)-2-hydroxycarboxylate + O2 = a 2-oxocarboxylate + H2O2. Its pathway is lipid metabolism; fatty acid metabolism. Functionally, oxidase that catalyzes the oxidation of a broad range of 2-hydroxyacids to the corresponding 2-oxoacids, with a reduction of O2 to H2O2. May be involved in a general medium- and long-chain fatty acid catabolic pathway such as alpha-oxidation. The polypeptide is Peroxisomal (S)-2-hydroxy-acid oxidase GLO4 (GLO4) (Oryza sativa subsp. japonica (Rice)).